The sequence spans 88 residues: Protein K3 (88 aa).

The S1 motif domain occupies 8-82 (LPNAGDVIKG…TKGYIDVNYK (75 aa)). Binding to host EIF2AK2/PKR regions lie at residues 43-53 (SVKMHMDRYVE) and 74-79 (KGYIDV).

This sequence belongs to the orthopoxvirus OPG041 family. In terms of assembly, interacts with host EIF2AK2/PKR kinase.

In terms of biological role, viral mimic of eIF-2-alpha that acts as a pseudosubstrate for EIF2AK2/PKR kinase. Inhibits therefore eIF-2-alpha phosphorylation by host EIF2AK2/PKR kinase and prevents protein synthesis shutoff. Determinant of host species specificity. This is Protein K3 (OPG041) from Homo sapiens (Human).